A 288-amino-acid chain; its full sequence is Beta-lactamase PSE-1 (288 aa).

Residues 1-17 form the signal peptide; that stretch reads MKFLLAFSLLIPSVVFA. Catalysis depends on Ser65, which acts as the Acyl-ester intermediate. The cysteines at positions 72 and 118 are disulfide-linked. 229–231 contacts substrate; the sequence is RSG.

The protein belongs to the class-A beta-lactamase family. As to quaternary structure, monomer.

The catalysed reaction is a beta-lactam + H2O = a substituted beta-amino acid. Its activity is regulated as follows. Inhibited by p-chloromercuribenzoate but not by cloxacillin. Hydrolyzes penicillin, ampicillin and carbenicillin but not other antibiotics including oxacillin, methicillin and cloxacillin. This chain is Beta-lactamase PSE-1, found in Pseudomonas aeruginosa.